The primary structure comprises 301 residues: Porphobilinogen deaminase (301 aa).

Position 235 is an S-(dipyrrolylmethanemethyl)cysteine (C235).

It belongs to the HMBS family. In terms of assembly, monomer. It depends on dipyrromethane as a cofactor.

It catalyses the reaction 4 porphobilinogen + H2O = hydroxymethylbilane + 4 NH4(+). Its pathway is porphyrin-containing compound metabolism; protoporphyrin-IX biosynthesis; coproporphyrinogen-III from 5-aminolevulinate: step 2/4. In terms of biological role, tetrapolymerization of the monopyrrole PBG into the hydroxymethylbilane pre-uroporphyrinogen in several discrete steps. The sequence is that of Porphobilinogen deaminase from Thermus thermophilus (strain ATCC BAA-163 / DSM 7039 / HB27).